A 316-amino-acid chain; its full sequence is Porphobilinogen deaminase (316 aa).

At Cys-245 the chain carries S-(dipyrrolylmethanemethyl)cysteine.

The protein belongs to the HMBS family. In terms of assembly, monomer. Dipyrromethane is required as a cofactor.

The catalysed reaction is 4 porphobilinogen + H2O = hydroxymethylbilane + 4 NH4(+). Its pathway is porphyrin-containing compound metabolism; protoporphyrin-IX biosynthesis; coproporphyrinogen-III from 5-aminolevulinate: step 2/4. It functions in the pathway porphyrin-containing compound metabolism; chlorophyll biosynthesis. Its function is as follows. Tetrapolymerization of the monopyrrole PBG into the hydroxymethylbilane pre-uroporphyrinogen in several discrete steps. This Prochlorococcus marinus (strain AS9601) protein is Porphobilinogen deaminase.